Reading from the N-terminus, the 152-residue chain is Deoxyuridine 5'-triphosphate nucleotidohydrolase (152 aa).

Substrate-binding positions include Arg71–Gly73, Asn84, Leu88–Asp90, and Met98.

This sequence belongs to the dUTPase family. The cofactor is Mg(2+).

The enzyme catalyses dUTP + H2O = dUMP + diphosphate + H(+). Its pathway is pyrimidine metabolism; dUMP biosynthesis; dUMP from dCTP (dUTP route): step 2/2. Functionally, this enzyme is involved in nucleotide metabolism: it produces dUMP, the immediate precursor of thymidine nucleotides and it decreases the intracellular concentration of dUTP so that uracil cannot be incorporated into DNA. The protein is Deoxyuridine 5'-triphosphate nucleotidohydrolase of Aeromonas salmonicida (strain A449).